The following is a 95-amino-acid chain: Small ribosomal subunit protein bS6 (95 aa).

It belongs to the bacterial ribosomal protein bS6 family.

Its function is as follows. Binds together with bS18 to 16S ribosomal RNA. In Clostridium acetobutylicum (strain ATCC 824 / DSM 792 / JCM 1419 / IAM 19013 / LMG 5710 / NBRC 13948 / NRRL B-527 / VKM B-1787 / 2291 / W), this protein is Small ribosomal subunit protein bS6.